A 398-amino-acid polypeptide reads, in one-letter code: 8-amino-7-oxononanoate synthase (398 aa).

Arg26 lines the substrate pocket. Pyridoxal 5'-phosphate is bound at residue 113–114; the sequence is GF. His138 contributes to the substrate binding site. Pyridoxal 5'-phosphate-binding residues include Ser181, His209, and Thr238. Lys241 is subject to N6-(pyridoxal phosphate)lysine. Thr355 lines the substrate pocket.

It belongs to the class-II pyridoxal-phosphate-dependent aminotransferase family. BioF subfamily. In terms of assembly, homodimer. Requires pyridoxal 5'-phosphate as cofactor.

The catalysed reaction is 6-carboxyhexanoyl-[ACP] + L-alanine + H(+) = (8S)-8-amino-7-oxononanoate + holo-[ACP] + CO2. It participates in cofactor biosynthesis; biotin biosynthesis. Functionally, catalyzes the decarboxylative condensation of pimeloyl-[acyl-carrier protein] and L-alanine to produce 8-amino-7-oxononanoate (AON), [acyl-carrier protein], and carbon dioxide. The protein is 8-amino-7-oxononanoate synthase of Aeromonas salmonicida (strain A449).